Consider the following 71-residue polypeptide: Exodeoxyribonuclease 7 small subunit (71 aa).

This sequence belongs to the XseB family. In terms of assembly, heterooligomer composed of large and small subunits.

Its subcellular location is the cytoplasm. The catalysed reaction is Exonucleolytic cleavage in either 5'- to 3'- or 3'- to 5'-direction to yield nucleoside 5'-phosphates.. Its function is as follows. Bidirectionally degrades single-stranded DNA into large acid-insoluble oligonucleotides, which are then degraded further into small acid-soluble oligonucleotides. The chain is Exodeoxyribonuclease 7 small subunit from Endomicrobium trichonymphae.